The sequence spans 180 residues: UPF0227 protein VV2369 (180 aa).

Belongs to the UPF0227 family.

The polypeptide is UPF0227 protein VV2369 (Vibrio vulnificus (strain YJ016)).